Here is a 101-residue protein sequence, read N- to C-terminus: Large ribosomal subunit protein uL24 (101 aa).

It belongs to the universal ribosomal protein uL24 family. As to quaternary structure, part of the 50S ribosomal subunit.

Functionally, one of two assembly initiator proteins, it binds directly to the 5'-end of the 23S rRNA, where it nucleates assembly of the 50S subunit. In terms of biological role, one of the proteins that surrounds the polypeptide exit tunnel on the outside of the subunit. In Dinoroseobacter shibae (strain DSM 16493 / NCIMB 14021 / DFL 12), this protein is Large ribosomal subunit protein uL24.